The sequence spans 142 residues: Complexin (142 aa).

2 disordered regions span residues 13–70 and 83–105; these read QLSA…MRQD and IVEAAPQEEPNPLMRKKKTPEEL. Positions 29–138 form a coiled coil; sequence GDDKEKAEEE…NELKTQIEGK (110 aa). Basic and acidic residues predominate over residues 31-70; it reads DKEKAEEEERERQEAIKEAEDRRKEKHRKMEEEREKMRQD. Cys-139 carries the post-translational modification Cysteine methyl ester. Cys-139 carries the S-farnesyl cysteine lipid modification. A propeptide spans 140 to 142 (removed in mature form); that stretch reads VMQ.

It belongs to the complexin/synaphin family. In terms of assembly, binds to the SNARE core complex containing Snap25, synaptobrevin and Syx1A.

It localises to the membrane. Functionally, positively regulates a late step in synaptic vesicle exocytosis. In Drosophila melanogaster (Fruit fly), this protein is Complexin (cpx).